The sequence spans 545 residues: Tyrosine decarboxylase 2 (545 aa).

Residues 23–44 (GYTNGNGHTNGNGNYNGNGHVN) are compositionally biased toward gly residues. Positions 23 to 45 (GYTNGNGHTNGNGNYNGNGHVNG) are disordered. L-tyrosine-binding residues include histidine 245 and histidine 360. At lysine 361 the chain carries N6-(pyridoxal phosphate)lysine. Tyrosine 390 contributes to the L-tyrosine binding site.

It belongs to the group II decarboxylase family. Homotetramer. Pyridoxal 5'-phosphate serves as cofactor. Expressed specifically in flowers.

The protein resides in the cytoplasm. The catalysed reaction is L-tyrosine + H(+) = tyramine + CO2. Functionally, converts tyrosine into tyramine, a precursor of isoquinoline alkaloids and various amides. The sequence is that of Tyrosine decarboxylase 2 from Arabidopsis thaliana (Mouse-ear cress).